The following is a 375-amino-acid chain: Serpin B5 (375 aa).

Residues asparagine 99, asparagine 133, asparagine 155, asparagine 188, and asparagine 361 are each glycosylated (N-linked (GlcNAc...) asparagine).

This sequence belongs to the serpin family. Ov-serpin subfamily. Interacts with IRF6.

The protein localises to the secreted. The protein resides in the extracellular space. Functionally, tumor suppressor. It blocks the growth, invasion, and metastatic properties of mammary tumors. As it does not undergo the S (stressed) to R (relaxed) conformational transition characteristic of active serpins, it exhibits no serine protease inhibitory activity. In Plecturocebus moloch (Dusky titi monkey), this protein is Serpin B5 (SERPINB5).